The sequence spans 255 residues: tRNA (guanine-N(1)-)-methyltransferase (255 aa).

S-adenosyl-L-methionine contacts are provided by residues glycine 121 and 141–146 (IGDYVL). The segment at 236–255 (PVKAPNRAGRQKTPKNKTDG) is disordered. Residues 244 to 255 (GRQKTPKNKTDG) show a composition bias toward basic residues.

This sequence belongs to the RNA methyltransferase TrmD family. Homodimer.

The protein resides in the cytoplasm. It carries out the reaction guanosine(37) in tRNA + S-adenosyl-L-methionine = N(1)-methylguanosine(37) in tRNA + S-adenosyl-L-homocysteine + H(+). In terms of biological role, specifically methylates guanosine-37 in various tRNAs. The chain is tRNA (guanine-N(1)-)-methyltransferase from Bradyrhizobium diazoefficiens (strain JCM 10833 / BCRC 13528 / IAM 13628 / NBRC 14792 / USDA 110).